A 157-amino-acid chain; its full sequence is MAIASQSLSVNQMYEKLLQNGEVESNSPKNRLRLYHLLQSKKIPFETKIIGYTSGEKSLSRWSGRRMGWDLGRVVKWIESGRLTREELQRCCDLFNQSNCKPRAELSDIENVFNKELNREQKCQLIKNNWDKILDDKWTPFDYCMLKKTIVRITLVK.

Belongs to the mimivirus L242/L243 family.

This is an uncharacterized protein from Acanthamoeba polyphaga (Amoeba).